The primary structure comprises 413 residues: Transmembrane protein 237B (413 aa).

The segment at 1–162 (MDPEAKVSSS…EDDDVITDPQ (162 aa)) is disordered. Polar residues predominate over residues 112 to 122 (DLVSNGDTLDQ). Transmembrane regions (helical) follow at residues 233 to 253 (VIGL…IIVV), 274 to 294 (LAYP…VSAF), 312 to 332 (LSPV…SLSQ), and 360 to 380 (ILYP…LAWI).

The protein belongs to the TMEM237 family.

It localises to the membrane. The protein localises to the cell projection. It is found in the cilium. Component of the transition zone in primary cilia. Required for ciliogenesis. The protein is Transmembrane protein 237B (tmem237b) of Danio rerio (Zebrafish).